Consider the following 633-residue polypeptide: Chitin synthase regulatory factor 4 (633 aa).

Residues 121–151 (ATSSQETKRDRPLPNIRNSAPSATRSHSTPC) are disordered. Residues 136 to 149 (IRNSAPSATRSHST) show a composition bias toward polar residues. Ser148 is subject to Phosphoserine. 5 Sel1-like repeats span residues 278-314 (AKAMYFDAYVYETGAFDVESDIQRAWDLYSSSANLGY), 315-346 (TRSLYRLGVLLEDQGNLEEAVEYFEKGVSEND), 438-474 (SSAQLRMGAVYEFGKYGCPVVPRYSLFYYSAAAKRGE), 475-511 (TEADLAVAKWYLNGSDGIPVDEDLAFMHAERASMAGN), and 512-543 (ANAQFLMGYLFDTRGNTEQATYWYNEAAKAGH). Positions 583-613 (ASETSPPHAPAVSSTPVTSAPPVSQTKVTKV) are disordered. A compositionally biased stretch (low complexity) spans 592–613 (PAVSSTPVTSAPPVSQTKVTKV).

The protein localises to the cytoplasm. Involved in septum formation. Required for the proper localization of chs2 at the septum. This is Chitin synthase regulatory factor 4 (chr4) from Schizosaccharomyces pombe (strain 972 / ATCC 24843) (Fission yeast).